We begin with the raw amino-acid sequence, 957 residues long: Glycine dehydrogenase (decarboxylating) (957 aa).

The residue at position 708 (Lys-708) is an N6-(pyridoxal phosphate)lysine.

It belongs to the GcvP family. In terms of assembly, the glycine cleavage system is composed of four proteins: P, T, L and H. Requires pyridoxal 5'-phosphate as cofactor.

It carries out the reaction N(6)-[(R)-lipoyl]-L-lysyl-[glycine-cleavage complex H protein] + glycine + H(+) = N(6)-[(R)-S(8)-aminomethyldihydrolipoyl]-L-lysyl-[glycine-cleavage complex H protein] + CO2. Its function is as follows. The glycine cleavage system catalyzes the degradation of glycine. The P protein binds the alpha-amino group of glycine through its pyridoxal phosphate cofactor; CO(2) is released and the remaining methylamine moiety is then transferred to the lipoamide cofactor of the H protein. This Salmonella heidelberg (strain SL476) protein is Glycine dehydrogenase (decarboxylating).